The sequence spans 31 residues: Cyclotide vpub-A (31 aa).

The segment at residues 1–31 (GVIPCGESCVFIPCISAVIGCSCKSKVCYRN) is a cross-link (cyclopeptide (Gly-Asn)). Disulfide bonds link Cys-5-Cys-21, Cys-9-Cys-23, and Cys-14-Cys-28.

Belongs to the cyclotide family. Bracelet subfamily. Post-translationally, this is a cyclic peptide.

Its function is as follows. Probably participates in a plant defense mechanism. This chain is Cyclotide vpub-A, found in Viola pubescens (Downy yellow violet).